The chain runs to 163 residues: Transcription antitermination protein NusB (163 aa).

Residues 1-21 form a disordered region; sequence MTTFLSDSEHPQDVKAPPKSA.

It belongs to the NusB family.

Its function is as follows. Involved in transcription antitermination. Required for transcription of ribosomal RNA (rRNA) genes. Binds specifically to the boxA antiterminator sequence of the ribosomal RNA (rrn) operons. The sequence is that of Transcription antitermination protein NusB from Dechloromonas aromatica (strain RCB).